Reading from the N-terminus, the 496-residue chain is D-2-hydroxyglutarate--pyruvate transhydrogenase DLD3 (496 aa).

Lysine 17 is covalently cross-linked (Glycyl lysine isopeptide (Lys-Gly) (interchain with G-Cter in ubiquitin)). The region spanning 64 to 243 is the FAD-binding PCMH-type domain; it reads YRGQSNLILL…TGVSIVAAAK (180 aa).

The protein belongs to the FAD-binding oxidoreductase/transferase type 4 family. FAD is required as a cofactor.

The protein localises to the cytoplasm. It catalyses the reaction (R)-lactate + 2 Fe(III)-[cytochrome c] = 2 Fe(II)-[cytochrome c] + pyruvate + 2 H(+). The enzyme catalyses (R)-2-hydroxyglutarate + pyruvate = (R)-lactate + 2-oxoglutarate. In terms of biological role, catalyzes the reversible oxidation of (R)-2-hydroxyglutarate to 2-oxoglutarate coupled to reduction of pyruvate to (R)-lactate. Can also use oxaloacetate as electron acceptor instead of pyruvate producing (R)-malate. In Saccharomyces cerevisiae (strain ATCC 204508 / S288c) (Baker's yeast), this protein is D-2-hydroxyglutarate--pyruvate transhydrogenase DLD3 (DLD3).